We begin with the raw amino-acid sequence, 1106 residues long: Carbamoyl phosphate synthase large chain (1106 aa).

Positions 1-401 (MPKRNDLNKV…AFLKALRSLE (401 aa)) are carboxyphosphate synthetic domain. Residues Arg-129, Arg-169, Gly-175, Gly-176, Arg-208, Val-210, Glu-215, Gly-241, Val-242, His-243, Gln-284, and Glu-298 each contribute to the ATP site. One can recognise an ATP-grasp 1 domain in the interval 133 to 327 (KTTMNDIGEP…IARVASKIAI (195 aa)). Residues Gln-284, Glu-298, and Asn-300 each contribute to the Mg(2+) site. Residues Gln-284, Glu-298, and Asn-300 each contribute to the Mn(2+) site. The oligomerization domain stretch occupies residues 402-577 (IDLDDLHQSI…YSAYNEENEA (176 aa)). Residues 578–964 (IPPSEPTHDK…ALYKAMLASG (387 aa)) form a carbamoyl phosphate synthetic domain region. Positions 706-896 (DQLLNKLGID…MVKIATKAMM (191 aa)) constitute an ATP-grasp 2 domain. Positions 742, 781, 783, 787, 812, 813, 814, 815, 855, and 867 each coordinate ATP. Residues Gln-855, Glu-867, and Asn-869 each contribute to the Mg(2+) site. Positions 855, 867, and 869 each coordinate Mn(2+). In terms of domain architecture, MGS-like spans 965–1106 (FSINLNGGVL…LQDYLKELSN (142 aa)). The interval 965–1106 (FSINLNGGVL…LQDYLKELSN (142 aa)) is allosteric domain.

It belongs to the CarB family. Composed of two chains; the small (or glutamine) chain promotes the hydrolysis of glutamine to ammonia, which is used by the large (or ammonia) chain to synthesize carbamoyl phosphate. Tetramer of heterodimers (alpha,beta)4. It depends on Mg(2+) as a cofactor. Mn(2+) is required as a cofactor.

The catalysed reaction is hydrogencarbonate + L-glutamine + 2 ATP + H2O = carbamoyl phosphate + L-glutamate + 2 ADP + phosphate + 2 H(+). The enzyme catalyses hydrogencarbonate + NH4(+) + 2 ATP = carbamoyl phosphate + 2 ADP + phosphate + 2 H(+). It participates in amino-acid biosynthesis; L-arginine biosynthesis; carbamoyl phosphate from bicarbonate: step 1/1. Its pathway is pyrimidine metabolism; UMP biosynthesis via de novo pathway; (S)-dihydroorotate from bicarbonate: step 1/3. In terms of biological role, large subunit of the glutamine-dependent carbamoyl phosphate synthetase (CPSase). CPSase catalyzes the formation of carbamoyl phosphate from the ammonia moiety of glutamine, carbonate, and phosphate donated by ATP, constituting the first step of 2 biosynthetic pathways, one leading to arginine and/or urea and the other to pyrimidine nucleotides. The large subunit (synthetase) binds the substrates ammonia (free or transferred from glutamine from the small subunit), hydrogencarbonate and ATP and carries out an ATP-coupled ligase reaction, activating hydrogencarbonate by forming carboxy phosphate which reacts with ammonia to form carbamoyl phosphate. The sequence is that of Carbamoyl phosphate synthase large chain from Natranaerobius thermophilus (strain ATCC BAA-1301 / DSM 18059 / JW/NM-WN-LF).